Here is a 348-residue protein sequence, read N- to C-terminus: Phosphoribosylformylglycinamidine cyclo-ligase (348 aa).

This sequence belongs to the AIR synthase family.

The protein resides in the cytoplasm. It catalyses the reaction 2-formamido-N(1)-(5-O-phospho-beta-D-ribosyl)acetamidine + ATP = 5-amino-1-(5-phospho-beta-D-ribosyl)imidazole + ADP + phosphate + H(+). The protein operates within purine metabolism; IMP biosynthesis via de novo pathway; 5-amino-1-(5-phospho-D-ribosyl)imidazole from N(2)-formyl-N(1)-(5-phospho-D-ribosyl)glycinamide: step 2/2. This Ruegeria sp. (strain TM1040) (Silicibacter sp.) protein is Phosphoribosylformylglycinamidine cyclo-ligase.